A 357-amino-acid chain; its full sequence is Dynein axonemal assembly factor 10 (357 aa).

WD repeat units lie at residues 63 to 105 (EKAK…MPVY), 115 to 154 (NAID…DPVA), 162 to 205 (ENKR…LRWE), 207 to 249 (NIKN…PTKG), 257 to 297 (AHKS…QRSK), and 319 to 357 (LSTQ…LNKI).

As to quaternary structure, component of the PAQosome complex which is responsible for the biogenesis of several protein complexes and which consists of R2TP complex members RUVBL1, RUVBL2, RPAP3 and PIH1D1, URI complex members PFDN2, PFDN6, PDRG1, UXT and URI1 as well as ASDURF, POLR2E and DNAAF10/WDR92. Interacts with PIH1D1; the interaction associates DNAAF10 with the R2TP complex. Interacts with several dynein axonemal assembly factors. Widely expressed with the highest expression in testis.

The protein localises to the dynein axonemal particle. Functionally, key assembly factor specifically required for the stability of axonemal dynein heavy chains in cytoplasm. This chain is Dynein axonemal assembly factor 10, found in Homo sapiens (Human).